The following is a 61-amino-acid chain: MKKLKITLVKSPIGYKYDQKDTVKRLGLRKLNSTVIKDDVPQIRGMIRKVRHLVKVEEIEE.

Belongs to the universal ribosomal protein uL30 family. Part of the 50S ribosomal subunit.

The protein is Large ribosomal subunit protein uL30 of Thermosipho africanus (strain TCF52B).